We begin with the raw amino-acid sequence, 142 residues long: Large ribosomal subunit protein uL13 (142 aa).

It belongs to the universal ribosomal protein uL13 family. Part of the 50S ribosomal subunit.

This protein is one of the early assembly proteins of the 50S ribosomal subunit, although it is not seen to bind rRNA by itself. It is important during the early stages of 50S assembly. The sequence is that of Large ribosomal subunit protein uL13 from Ralstonia nicotianae (strain ATCC BAA-1114 / GMI1000) (Ralstonia solanacearum).